The sequence spans 729 residues: Solute carrier family 15 member 2 (729 aa).

The interval 1-34 (MNPFQKNESKETLFSPVSTEEMLPGPPSPPKKST) is disordered. The Cytoplasmic portion of the chain corresponds to 1–57 (MNPFQKNESKETLFSPVSTEEMLPGPPSPPKKSTPKLFGSSYPLSIAFIVVNEFCER). S9 carries the post-translational modification Phosphoserine. Position 12 is a phosphothreonine (T12). A Phosphoserine modification is found at S28. Residues 58–78 (FSYYGMKAVLTLYFLYFLHWN) form a helical membrane-spanning segment. Topologically, residues 79 to 87 (EDTSTSVYH) are extracellular. The helical transmembrane segment at 88 to 108 (AFSSLCYFTPILGAAIADSWL) threads the bilayer. Over 109–113 (GKFKT) the chain is Cytoplasmic. The chain crosses the membrane as a helical span at residues 114-134 (IIYLSLVYVLGHVFKSLGAIP). Residues 135–139 (ILGGK) are Extracellular-facing. A helical membrane pass occupies residues 140-160 (MLHTILSLVGLSLIALGTGGI). Over 161 to 183 (KPCVAAFGGDQFEEEHAEARTRY) the chain is Cytoplasmic. Residues 184–204 (FSVFYLSINAGSLISTFITPM) traverse the membrane as a helical segment. Topologically, residues 205–217 (LRGDVKCFGEDCY) are extracellular. The chain crosses the membrane as a helical span at residues 218-238 (ALAFGIPGLLMVLALVVFAMG). Residues 239–295 (SKMYRKPPPEGNIVAQVTKCIWFAICNRFRNRSEDIPKRQHWLDWAAEKYPKHLIMD) lie on the Cytoplasmic side of the membrane. Residues 296 to 316 (VKALTRILFLYIPLPMFWALL) form a helical membrane-spanning segment. Residues 317–343 (DQQGSRWTLQANKMDGDLGFFVLQPDQ) are Extracellular-facing. The helical transmembrane segment at 344-364 (MQVLNPFLVLVFIPLFDLVIY) threads the bilayer. Residues 365–380 (RLISKCGVNFSSLRKM) are Cytoplasmic-facing. Residues 381-401 (AVGMILACLAFAVAALVEIKI) form a helical membrane-spanning segment. Over 402-611 (NGMIHPQPAS…PANKLSIAWQ (210 aa)) the chain is Extracellular. Positions 402–611 (NGMIHPQPAS…PANKLSIAWQ (210 aa)) are extracellular domain (ECD). 4 N-linked (GlcNAc...) asparagine glycosylation sites follow: N448, N472, N528, and N587. The chain crosses the membrane as a helical span at residues 612–632 (LPQYVLVTAAEVMFSVTGLEF). The Cytoplasmic portion of the chain corresponds to 633 to 643 (SYSQAPSSMKS). A helical transmembrane segment spans residues 644-664 (VLQAAWLLTVAVGNIIVLIVA). Topologically, residues 665 to 674 (QFSGLVQWAE) are extracellular. Residues 675-695 (FVLFSCLLLVVCLIFSVMGYY) traverse the membrane as a helical segment. The Cytoplasmic segment spans residues 696–729 (YVPLKSEGIHEATEKQIPHIQGNMINLETKNTRL).

This sequence belongs to the major facilitator superfamily. Proton-dependent oligopeptide transporter (POT/PTR) (TC 2.A.17) family. In terms of assembly, interacts (via extracellular domain region) with trypsin. As to expression, expressed in kidney brush border cells (at protein level). Highly expressed in macrophages.

It is found in the apical cell membrane. It localises to the cytoplasmic vesicle. The protein resides in the phagosome membrane. The protein localises to the cell membrane. The catalysed reaction is N-acetyl-D-muramoyl-L-alanyl-D-isoglutamine(out) + 3 H(+)(out) = N-acetyl-D-muramoyl-L-alanyl-D-isoglutamine(in) + 3 H(+)(in). It carries out the reaction a dipeptide(out) + 2 H(+)(out) = a dipeptide(in) + 2 H(+)(in). It catalyses the reaction glycyl-L-leucine(out) + 2 H(+)(out) = glycyl-L-leucine(in) + 2 H(+)(in). The enzyme catalyses glycyl-L-lysine(out) + 2 H(+)(out) = glycyl-L-lysine(in) + 2 H(+)(in). The catalysed reaction is glycyl-L-glutamate(out) + 3 H(+)(out) = glycyl-L-glutamate(in) + 3 H(+)(in). It carries out the reaction L-alanyl-L-alanine(out) + 2 H(+)(out) = L-alanyl-L-alanine(in) + 2 H(+)(in). It catalyses the reaction an L-amino acid tripeptide(out) + 2 H(+)(out) = an L-amino acid tripeptide(in) + 2 H(+)(in). The enzyme catalyses carnosine(out) + 2 H(+)(out) = carnosine(in) + 2 H(+)(in). Functionally, proton-coupled amino-acid transporter that transports oligopeptides of 2 to 4 amino acids with a preference for dipeptides. Transports neutral and anionic dipeptides with a proton to peptide stoichiometry of 2:1 or 3:1. In kidney, involved in the absorption of circulating di- and tripeptides from the glomerular filtrate. Can also transport beta-lactam antibiotics, such as the aminocephalosporin cefadroxil, and other antiviral and anticancer drugs. Transports the dipeptide-like aminopeptidase inhibitor bestatin. Also able to transport carnosine. Involved in innate immunity by promoting the detection of microbial pathogens by NOD-like receptors (NLRs). Mediates transport of bacterial peptidoglycans across the plasma membrane or, in macrophages, the phagosome membrane: catalyzes the transport of certain bacterial peptidoglycans, such as muramyl dipeptide (MDP), the NOD2 ligand. In Mus musculus (Mouse), this protein is Solute carrier family 15 member 2.